The following is a 623-amino-acid chain: Replication protein A 70 kDa DNA-binding subunit (623 aa).

At methionine 1 the chain carries N-acetylmethionine. Glycyl lysine isopeptide (Lys-Gly) (interchain with G-Cter in ubiquitin) cross-links involve residues lysine 22 and lysine 88. The segment at valine 116–threonine 163 is disordered. A compositionally biased stretch (low complexity) spans glutamine 124 to glutamine 154. 2 positions are modified to N6-acetyllysine; alternate: lysine 172 and lysine 176. Residues lysine 172 and lysine 176 each participate in a glycyl lysine isopeptide (Lys-Gly) (interchain with G-Cter in ubiquitin); alternate cross-link. Position 189 is a phosphothreonine (threonine 189). Residue lysine 192 forms a Glycyl lysine isopeptide (Lys-Gly) (interchain with G-Cter in ubiquitin) linkage. Threonine 200 carries the phosphothreonine modification. A DNA-binding region (OB) is located at residues tryptophan 206–asparagine 290. Glycyl lysine isopeptide (Lys-Gly) (interchain with G-Cter in ubiquitin) cross-links involve residues lysine 229 and lysine 253. Residue lysine 268 is modified to N6-acetyllysine; alternate. Residue lysine 268 forms a Glycyl lysine isopeptide (Lys-Gly) (interchain with G-Cter in ubiquitin); alternate linkage. Glycyl lysine isopeptide (Lys-Gly) (interchain with G-Cter in ubiquitin) cross-links involve residues lysine 276 and lysine 340. Serine 393 carries the post-translational modification Phosphoserine. Residue lysine 419 forms a Glycyl lysine isopeptide (Lys-Gly) (interchain with G-Cter in ubiquitin) linkage. Lysine 458 participates in a covalent cross-link: Glycyl lysine isopeptide (Lys-Gly) (interchain with G-Cter in SUMO). Lysine 467 is covalently cross-linked (Glycyl lysine isopeptide (Lys-Gly) (interchain with G-Cter in ubiquitin)). The segment at cysteine 490–cysteine 512 adopts a C4-type zinc-finger fold. Lysine 562 is covalently cross-linked (Glycyl lysine isopeptide (Lys-Gly) (interchain with G-Cter in ubiquitin)). Residue lysine 586 forms a Glycyl lysine isopeptide (Lys-Gly) (interchain with G-Cter in SUMO) linkage.

The protein belongs to the replication factor A protein 1 family. Component of the canonical replication protein A complex (RPA), a heterotrimer composed of RPA1, RPA2 and RPA3. The DNA-binding activity may reside exclusively on the RPA1 subunit. Interacts with PRPF19; the PRP19-CDC5L complex is recruited to the sites of DNA repair where it ubiquitinates the replication protein A complex (RPA). Interacts with RIPK1. Interacts with the polymerase alpha subunit POLA1/p180; this interaction stabilizes the replicative complex and reduces the misincorporation rate of DNA polymerase alpha by acting as a fidelity clamp. Interacts with RAD51 and SENP6 to regulate DNA repair. Interacts with HELB; this interaction promotes HELB recruitment to chromatin following DNA damage. Interacts with PRIMPOL; leading to recruit PRIMPOL on chromatin and stimulate its DNA primase activity. Interacts with XPA; the interaction is direct and associates XPA with the RPA complex. Interacts with ETAA1; the interaction is direct and promotes ETAA1 recruitment at stalled replication forks. Interacts with RPA1; this interaction associates HROB with the RPA complex. Interacts (when poly-ADP-ribosylated) with HTATSF1. DNA damage-induced 'Lys-63'-linked polyubiquitination by PRPF19 mediates ATRIP recruitment to the RPA complex at sites of DNA damage and activation of ATR. Ubiquitinated by RFWD3 at stalled replication forks in response to DNA damage: ubiquitination by RFWD3 does not lead to degradation by the proteasome and promotes removal of the RPA complex from stalled replication forks, promoting homologous recombination. In terms of processing, sumoylated on lysine residues Lys-458 and Lys-586, with Lys-458 being the major site. Sumoylation promotes recruitment of RAD51 to the DNA damage foci to initiate DNA repair through homologous recombination. Desumoylated by SENP6. Post-translationally, poly-ADP-ribosylated by PARP1; promoting recruitment of HTATSF1.

It is found in the nucleus. It localises to the PML body. Its function is as follows. As part of the heterotrimeric replication protein A complex (RPA/RP-A), binds and stabilizes single-stranded DNA intermediates, that form during DNA replication or upon DNA stress. It prevents their reannealing and in parallel, recruits and activates different proteins and complexes involved in DNA metabolism. Thereby, it plays an essential role both in DNA replication and the cellular response to DNA damage. In the cellular response to DNA damage, the RPA complex controls DNA repair and DNA damage checkpoint activation. Through recruitment of ATRIP activates the ATR kinase a master regulator of the DNA damage response. It is required for the recruitment of the DNA double-strand break repair factors RAD51 and RAD52 to chromatin in response to DNA damage. Also recruits to sites of DNA damage proteins like XPA and XPG that are involved in nucleotide excision repair and is required for this mechanism of DNA repair. Also plays a role in base excision repair (BER) probably through interaction with UNG. Also recruits SMARCAL1/HARP, which is involved in replication fork restart, to sites of DNA damage. May also play a role in telomere maintenance. This Mus musculus (Mouse) protein is Replication protein A 70 kDa DNA-binding subunit (Rpa1).